The following is a 446-amino-acid chain: High mobility group B protein 13 (446 aa).

Disordered regions lie at residues 1-43 (MSTV…TKSF) and 110-130 (LAQT…AETK). Positions 11-22 (AKKSRNSRKALK) are enriched in basic residues. 2 DNA-binding regions (HMG box) span residues 129-197 (TKRP…TKEK) and 246-312 (PKQP…EGYK). Positions 349-371 (NIIKKTKETAKNKKKNENVDPNK) are enriched in basic and acidic residues. Residues 349 to 377 (NIIKKTKETAKNKKKNENVDPNKPKKPTS) form a disordered region. Residues 372–440 (PKKPTSSYFL…AYKKEVEEYN (69 aa)) constitute a DNA-binding region (HMG box 3).

The protein belongs to the HMGB family.

The protein resides in the nucleus. The polypeptide is High mobility group B protein 13 (HMGB13) (Arabidopsis thaliana (Mouse-ear cress)).